The chain runs to 339 residues: 3-isopropylmalate dehydrogenase (339 aa).

Substrate contacts are provided by Arg-88, Arg-98, Arg-122, and Asp-212. The Mg(2+) site is built by Asp-212, Asp-236, and Asp-240. 272–284 serves as a coordination point for NAD(+); it reads GSAPDIAGQGIAD.

It belongs to the isocitrate and isopropylmalate dehydrogenases family. LeuB type 2 subfamily. Homodimer. Mg(2+) is required as a cofactor. Mn(2+) serves as cofactor.

It localises to the cytoplasm. It catalyses the reaction (2R,3S)-3-isopropylmalate + NAD(+) = 4-methyl-2-oxopentanoate + CO2 + NADH. It participates in amino-acid biosynthesis; L-leucine biosynthesis; L-leucine from 3-methyl-2-oxobutanoate: step 3/4. In terms of biological role, catalyzes the oxidation of 3-carboxy-2-hydroxy-4-methylpentanoate (3-isopropylmalate) to 3-carboxy-4-methyl-2-oxopentanoate. The product decarboxylates to 4-methyl-2 oxopentanoate. The protein is 3-isopropylmalate dehydrogenase of Corynebacterium urealyticum (strain ATCC 43042 / DSM 7109).